The following is an 84-amino-acid chain: Kunitz-type serine protease inhibitor 2 (84 aa).

An N-terminal signal peptide occupies residues 1 to 24; the sequence is MSSGGLLLLLGLLTLWAEPTPISG. The residue at position 25 (Q25) is a Pyrrolidone carboxylic acid. A BPTI/Kunitz inhibitor domain is found at 31–81; the sequence is CFLRPDFGRYGHPRPRFYYNPATNQCQGFLAQRSRENTNNFDTRDKCRQTC. Disulfide bonds link C31–C81 and C56–C77.

The protein belongs to the venom Kunitz-type family. In terms of tissue distribution, expressed by the venom gland.

It is found in the secreted. Its function is as follows. Serine protease inhibitor. The protein is Kunitz-type serine protease inhibitor 2 of Daboia russelii (Russel's viper).